A 441-amino-acid chain; its full sequence is Adenylyltransferase and sulfurtransferase MOCS3 (441 aa).

ATP contacts are provided by residues Gly83, Asp104, 111-115 (TNLHR), Lys128, and 172-173 (DN). Zn(2+)-binding residues include Cys213 and Cys216. Cys230 functions as the Glycyl thioester intermediate; for adenylyltransferase activity in the catalytic mechanism. Residues Cys288 and Cys291 each contribute to the Zn(2+) site. Positions 339-439 (AGRDHLLVDV…WTKTIDPNFP (101 aa)) constitute a Rhodanese domain. The Cysteine persulfide intermediate; for sulfurtransferase activity role is filled by Cys395.

The protein in the N-terminal section; belongs to the HesA/MoeB/ThiF family. UBA4 subfamily. It depends on Zn(2+) as a cofactor.

The protein localises to the cytoplasm. It carries out the reaction [molybdopterin-synthase sulfur-carrier protein]-C-terminal Gly-Gly + ATP + H(+) = [molybdopterin-synthase sulfur-carrier protein]-C-terminal Gly-Gly-AMP + diphosphate. It catalyses the reaction [molybdopterin-synthase sulfur-carrier protein]-C-terminal Gly-Gly-AMP + S-sulfanyl-L-cysteinyl-[cysteine desulfurase] + AH2 = [molybdopterin-synthase sulfur-carrier protein]-C-terminal-Gly-aminoethanethioate + L-cysteinyl-[cysteine desulfurase] + A + AMP + 2 H(+). It participates in tRNA modification; 5-methoxycarbonylmethyl-2-thiouridine-tRNA biosynthesis. The protein operates within cofactor biosynthesis; molybdopterin biosynthesis. In terms of biological role, plays a central role in 2-thiolation of mcm(5)S(2)U at tRNA wobble positions of cytosolic tRNA(Lys), tRNA(Glu) and tRNA(Gln). Also essential during biosynthesis of the molybdenum cofactor. Acts by mediating the C-terminal thiocarboxylation of sulfur carriers URM1 and MOCS2A. Its N-terminus first activates URM1 and MOCS2A as acyl-adenylates (-COAMP), then the persulfide sulfur on the catalytic cysteine is transferred to URM1 and MOCS2A to form thiocarboxylation (-COSH) of their C-terminus. The reaction probably involves hydrogen sulfide that is generated from the persulfide intermediate and that acts as a nucleophile towards URM1 and MOCS2A. Subsequently, a transient disulfide bond is formed. Does not use thiosulfate as sulfur donor; NFS1 probably acting as a sulfur donor for thiocarboxylation reactions. The protein is Adenylyltransferase and sulfurtransferase MOCS3 of Anopheles gambiae (African malaria mosquito).